The following is a 192-amino-acid chain: Phosphomevalonate kinase (192 aa).

ATP contacts are provided by residues 17-23 (KRKSGKD) and Arg-141. Substrate is bound at residue Asn-170. Residues His-171 and Gln-180 each contribute to the ATP site.

In terms of assembly, monomer.

It is found in the cytoplasm. The protein resides in the cytosol. It carries out the reaction (R)-5-phosphomevalonate + ATP = (R)-5-diphosphomevalonate + ADP. It participates in isoprenoid biosynthesis; isopentenyl diphosphate biosynthesis via mevalonate pathway; isopentenyl diphosphate from (R)-mevalonate: step 2/3. Its function is as follows. Catalyzes the reversible ATP-dependent phosphorylation of mevalonate 5-phosphate to produce mevalonate diphosphate and ADP, a key step in the mevalonic acid mediated biosynthesis of isopentenyl diphosphate and other polyisoprenoid metabolites. The sequence is that of Phosphomevalonate kinase (PMVK) from Bos taurus (Bovine).